The sequence spans 739 residues: Phosphoribosylformylglycinamidine synthase subunit PurL (739 aa).

His-52 is a catalytic residue. The ATP site is built by Tyr-55 and Lys-94. Glu-96 is a binding site for Mg(2+). Substrate contacts are provided by residues 97–100 and Arg-119; that span reads SHNH. His-98 serves as the catalytic Proton acceptor. Asp-120 provides a ligand contact to Mg(2+). Gln-243 contacts substrate. Asp-271 is a Mg(2+) binding site. Residue 315–317 participates in substrate binding; sequence ESQ. Residues Asp-498 and Gly-535 each coordinate ATP. Residue Asn-536 coordinates Mg(2+). Ser-538 lines the substrate pocket.

This sequence belongs to the FGAMS family. In terms of assembly, monomer. Part of the FGAM synthase complex composed of 1 PurL, 1 PurQ and 2 PurS subunits.

Its subcellular location is the cytoplasm. The catalysed reaction is N(2)-formyl-N(1)-(5-phospho-beta-D-ribosyl)glycinamide + L-glutamine + ATP + H2O = 2-formamido-N(1)-(5-O-phospho-beta-D-ribosyl)acetamidine + L-glutamate + ADP + phosphate + H(+). It functions in the pathway purine metabolism; IMP biosynthesis via de novo pathway; 5-amino-1-(5-phospho-D-ribosyl)imidazole from N(2)-formyl-N(1)-(5-phospho-D-ribosyl)glycinamide: step 1/2. In terms of biological role, part of the phosphoribosylformylglycinamidine synthase complex involved in the purines biosynthetic pathway. Catalyzes the ATP-dependent conversion of formylglycinamide ribonucleotide (FGAR) and glutamine to yield formylglycinamidine ribonucleotide (FGAM) and glutamate. The FGAM synthase complex is composed of three subunits. PurQ produces an ammonia molecule by converting glutamine to glutamate. PurL transfers the ammonia molecule to FGAR to form FGAM in an ATP-dependent manner. PurS interacts with PurQ and PurL and is thought to assist in the transfer of the ammonia molecule from PurQ to PurL. The polypeptide is Phosphoribosylformylglycinamidine synthase subunit PurL (Caulobacter vibrioides (strain ATCC 19089 / CIP 103742 / CB 15) (Caulobacter crescentus)).